Reading from the N-terminus, the 129-residue chain is Large ribosomal subunit protein bL19 (129 aa).

This sequence belongs to the bacterial ribosomal protein bL19 family.

Its function is as follows. This protein is located at the 30S-50S ribosomal subunit interface and may play a role in the structure and function of the aminoacyl-tRNA binding site. This Paraburkholderia phytofirmans (strain DSM 17436 / LMG 22146 / PsJN) (Burkholderia phytofirmans) protein is Large ribosomal subunit protein bL19.